The sequence spans 93 residues: Putative regulatory protein Cthe_1316 (93 aa).

The disordered stretch occupies residues 74–93 (RLNTKEAEDVEVDDEEEIDE). The segment covering 81-93 (EDVEVDDEEEIDE) has biased composition (acidic residues).

This sequence belongs to the RemA family.

In Acetivibrio thermocellus (strain ATCC 27405 / DSM 1237 / JCM 9322 / NBRC 103400 / NCIMB 10682 / NRRL B-4536 / VPI 7372) (Clostridium thermocellum), this protein is Putative regulatory protein Cthe_1316.